We begin with the raw amino-acid sequence, 313 residues long: 4-hydroxy-3-methylbut-2-enyl diphosphate reductase (313 aa).

Cys-12 contacts [4Fe-4S] cluster. 2 residues coordinate (2E)-4-hydroxy-3-methylbut-2-enyl diphosphate: His-41 and His-74. His-41 and His-74 together coordinate dimethylallyl diphosphate. Residues His-41 and His-74 each contribute to the isopentenyl diphosphate site. Position 96 (Cys-96) interacts with [4Fe-4S] cluster. His-124 provides a ligand contact to (2E)-4-hydroxy-3-methylbut-2-enyl diphosphate. Residue His-124 coordinates dimethylallyl diphosphate. His-124 contributes to the isopentenyl diphosphate binding site. Glu-126 serves as the catalytic Proton donor. Thr-164 serves as a coordination point for (2E)-4-hydroxy-3-methylbut-2-enyl diphosphate. Residue Cys-194 coordinates [4Fe-4S] cluster. The (2E)-4-hydroxy-3-methylbut-2-enyl diphosphate site is built by Ser-222, Ser-223, Asn-224, and Ser-266. Residues Ser-222, Ser-223, Asn-224, and Ser-266 each contribute to the dimethylallyl diphosphate site. 4 residues coordinate isopentenyl diphosphate: Ser-222, Ser-223, Asn-224, and Ser-266.

This sequence belongs to the IspH family. Requires [4Fe-4S] cluster as cofactor.

It catalyses the reaction isopentenyl diphosphate + 2 oxidized [2Fe-2S]-[ferredoxin] + H2O = (2E)-4-hydroxy-3-methylbut-2-enyl diphosphate + 2 reduced [2Fe-2S]-[ferredoxin] + 2 H(+). It carries out the reaction dimethylallyl diphosphate + 2 oxidized [2Fe-2S]-[ferredoxin] + H2O = (2E)-4-hydroxy-3-methylbut-2-enyl diphosphate + 2 reduced [2Fe-2S]-[ferredoxin] + 2 H(+). The protein operates within isoprenoid biosynthesis; dimethylallyl diphosphate biosynthesis; dimethylallyl diphosphate from (2E)-4-hydroxy-3-methylbutenyl diphosphate: step 1/1. It participates in isoprenoid biosynthesis; isopentenyl diphosphate biosynthesis via DXP pathway; isopentenyl diphosphate from 1-deoxy-D-xylulose 5-phosphate: step 6/6. In terms of biological role, catalyzes the conversion of 1-hydroxy-2-methyl-2-(E)-butenyl 4-diphosphate (HMBPP) into a mixture of isopentenyl diphosphate (IPP) and dimethylallyl diphosphate (DMAPP). Acts in the terminal step of the DOXP/MEP pathway for isoprenoid precursor biosynthesis. This chain is 4-hydroxy-3-methylbut-2-enyl diphosphate reductase, found in Burkholderia pseudomallei (strain 1026b).